The sequence spans 722 residues: Polyribonucleotide nucleotidyltransferase (722 aa).

Mg(2+) is bound by residues D487 and D493. The 60-residue stretch at 554–613 (PRMVSFKIHPDKIREVIGKGGATIQALTKETGCSIDIKDDGTVTIASTSAEGMAEAKARI) folds into the KH domain. Residues 623–691 (GKIYEGPVVK…ERGRLRLSLK (69 aa)) form the S1 motif domain.

Belongs to the polyribonucleotide nucleotidyltransferase family. Mg(2+) is required as a cofactor.

Its subcellular location is the cytoplasm. It catalyses the reaction RNA(n+1) + phosphate = RNA(n) + a ribonucleoside 5'-diphosphate. Its function is as follows. Involved in mRNA degradation. Catalyzes the phosphorolysis of single-stranded polyribonucleotides processively in the 3'- to 5'-direction. The sequence is that of Polyribonucleotide nucleotidyltransferase from Polynucleobacter asymbioticus (strain DSM 18221 / CIP 109841 / QLW-P1DMWA-1) (Polynucleobacter necessarius subsp. asymbioticus).